A 128-amino-acid chain; its full sequence is L-ectoine synthase (128 aa).

The protein belongs to the ectoine synthase family.

The catalysed reaction is (2S)-4-acetamido-2-aminobutanoate = L-ectoine + H2O. Its pathway is amine and polyamine biosynthesis; ectoine biosynthesis; L-ectoine from L-aspartate 4-semialdehyde: step 3/3. Catalyzes the circularization of gamma-N-acetyl-alpha,gamma-diaminobutyric acid (ADABA) to ectoine (1,4,5,6-tetrahydro-2-methyl-4-pyrimidine carboxylic acid), which is an excellent osmoprotectant. In Aliivibrio fischeri (strain ATCC 700601 / ES114) (Vibrio fischeri), this protein is L-ectoine synthase.